The chain runs to 488 residues: Probable Xaa-Pro aminopeptidase ATEG_00858 (488 aa).

Residues Asp-273, Asp-284, Glu-417, and Glu-456 each coordinate Mn(2+).

The protein belongs to the peptidase M24B family. Mn(2+) is required as a cofactor.

It catalyses the reaction Release of any N-terminal amino acid, including proline, that is linked to proline, even from a dipeptide or tripeptide.. Functionally, catalyzes the removal of a penultimate prolyl residue from the N-termini of peptides. The polypeptide is Probable Xaa-Pro aminopeptidase ATEG_00858 (Aspergillus terreus (strain NIH 2624 / FGSC A1156)).